We begin with the raw amino-acid sequence, 181 residues long: MGLTFTKLFSRLFAKKEMRILMVGLDAAGKTTILYKLKLGEIVTTIPTIGFNVETVEYKNISFTVWDVGGQDKIRPLWRHYFQNTQGLIFVVDSNDRERVVEARDELHRMLNEDELRDAVLLVFANKQDLPNAMNAAEITDKLGLHSLRQRHWYIQSTCATSGEGLYEGLDWLSNNIASKA.

Gly-2 is lipidated: N-myristoyl glycine. Residues 24 to 31, 67 to 71, and 126 to 129 each bind GTP; these read GLDAAGKT, DVGGQ, and NKQD.

The protein belongs to the small GTPase superfamily. Arf family. As to expression, seedling shoots.

Its subcellular location is the golgi apparatus. It carries out the reaction GTP + H2O = GDP + phosphate + H(+). GTP-binding protein involved in protein trafficking; may modulate vesicle budding and uncoating within the Golgi apparatus. In Oryza sativa subsp. japonica (Rice), this protein is ADP-ribosylation factor 1.